The sequence spans 346 residues: fMet-Leu-Phe receptor (346 aa).

2 N-linked (GlcNAc...) asparagine glycosylation sites follow: N1 and N7. Residues 1–24 are Extracellular-facing; that stretch reads NSSLPTNISGGTPAVSAGYLFLDI. Residues 25–47 traverse the membrane as a helical segment; the sequence is ITYLVYAVTFVLGVLGNGLVIWV. Over 48-58 the chain is Cytoplasmic; the sequence is AGFRMTHTVTT. The chain crosses the membrane as a helical span at residues 59-80; it reads ISYLNLAVADFCFTSTLPFFMV. Over 81–97 the chain is Extracellular; sequence RKAMGGHWPFGWFLCKF. C95 and C173 are joined by a disulfide. Residues 98-118 form a helical membrane-spanning segment; that stretch reads IFTIVDINLFGSVFLIALIAL. Residues 119–137 are Cytoplasmic-facing; sequence DRCVCVLHPVWTQNHRTVS. Residues 138–159 traverse the membrane as a helical segment; that stretch reads LAKKVIIGPWVMALLLTLPVII. Over 160 to 202 the chain is Extracellular; sequence RVTTVPGKMGTVSCTFNFSPWTNDPKERIKVAIAMLTVRGIIR. The chain crosses the membrane as a helical span at residues 203–223; it reads FIIGFSAPMSIVAVSYGLIAT. Residues 224 to 239 are Cytoplasmic-facing; sequence KIHKQGLIKSSRPLRV. Residues 240–263 form a helical membrane-spanning segment; the sequence is LSFVAAAFFLCWSPYQVVAFIATV. The Extracellular segment spans residues 264–282; the sequence is RIRELLQGMYKEISIAVDV. Residues 283–302 traverse the membrane as a helical segment; it reads TSALAFFNSCLNPMLYVFMG. Residues 303 to 346 lie on the Cytoplasmic side of the membrane; the sequence is QDFRERLIHSLPASLERALTEASTQTSDTATNSTLPSAEVALQA. Polar residues predominate over residues 324–338; it reads ASTQTSDTATNSTLP. Residues 324 to 346 form a disordered region; sequence ASTQTSDTATNSTLPSAEVALQA.

Belongs to the G-protein coupled receptor 1 family. Phosphorylated; which is necessary for desensitization.

It is found in the cell membrane. In terms of biological role, high affinity receptor for N-formyl-methionyl peptides (fMLP), which are powerful neutrophil chemotactic factors. Binding of fMLP to the receptor stimulates intracellular calcium mobilization and superoxide anion release. This response is mediated via a G-protein that activates a phosphatidylinositol-calcium second messenger system. Receptor for TAFA4, mediates its effects on chemoattracting macrophages, promoting phagocytosis and increasing ROS release. Receptor for cathepsin CTSG, leading to increased phagocyte chemotaxis. In Pongo pygmaeus (Bornean orangutan), this protein is fMet-Leu-Phe receptor (FPR1).